A 152-amino-acid chain; its full sequence is Small ribosomal subunit protein uS15 (152 aa).

Positions 1-11 (MAKMHTKRKGK) are enriched in basic residues. The segment at 1–22 (MAKMHTKRKGKSSSTRPIRTEP) is disordered.

The protein belongs to the universal ribosomal protein uS15 family. As to quaternary structure, part of the 30S ribosomal subunit.

The polypeptide is Small ribosomal subunit protein uS15 (Methanosarcina barkeri (strain Fusaro / DSM 804)).